Consider the following 81-residue polypeptide: UPF0180 protein YkuS (81 aa).

Belongs to the UPF0180 family.

In Bacillus subtilis (strain 168), this protein is UPF0180 protein YkuS (ykuS).